The following is a 130-amino-acid chain: MTRLNTIADGMSALKNAGDTGKSEVTIEPASKLLGAMLRIMQDAGYIAGFEFIEDGRGGQLKVHLTGKINKCGAICPRFSVQLDEMEYWEKQYLPGKNFGLMILSTSHGVMSHVQARREGIGGELLGYVY.

Belongs to the universal ribosomal protein uS8 family. Part of the 30S ribosomal subunit.

In terms of biological role, one of the primary rRNA binding proteins, it binds directly to 16S rRNA central domain where it helps coordinate assembly of the platform of the 30S subunit. This chain is Small ribosomal subunit protein uS8, found in Methanoregula boonei (strain DSM 21154 / JCM 14090 / 6A8).